The primary structure comprises 360 residues: MPKKILFTGGGTVGHVTLNLILIPKFIKDGWEVHYIGDKNGIEHTEIEKSGLDVTFHAIATGKLRRYFSWQNLADVFKVALGLLQSLFIVAKLRPQALFSKGGFVSVPPVVAAKLLGKPVFIHESDRSMGLANKIAYKFATTVYTTFEQEDQLSKVKHLGAVTKVFKDANQIPESTQLEAVNEYFSRDLKTLLFIGGSAGAHVFNQFISDHPELKQRYNIINITGDPHLNELSSHLYRVDYVTDLYQPLMAMADLVVTRGGSNTLFELLAMAKLHLIVPLGKEASRGDQLENATYFEKRGYAKQLQEPDLTLHNFDQAMADLFEHQADYEATMLATKEIQSPDFFYDLLRADISSAIKEK.

Serine 198 and glutamine 289 together coordinate UDP-N-acetyl-alpha-D-glucosamine.

The protein belongs to the glycosyltransferase 28 family. MurG subfamily.

Its subcellular location is the cell membrane. The enzyme catalyses Mur2Ac(oyl-L-Ala-gamma-D-Glu-L-Lys-D-Ala-D-Ala)-di-trans,octa-cis-undecaprenyl diphosphate + UDP-N-acetyl-alpha-D-glucosamine = beta-D-GlcNAc-(1-&gt;4)-Mur2Ac(oyl-L-Ala-gamma-D-Glu-L-Lys-D-Ala-D-Ala)-di-trans,octa-cis-undecaprenyl diphosphate + UDP + H(+). It functions in the pathway cell wall biogenesis; peptidoglycan biosynthesis. Its function is as follows. Cell wall formation. Catalyzes the transfer of a GlcNAc subunit on undecaprenyl-pyrophosphoryl-MurNAc-pentapeptide (lipid intermediate I) to form undecaprenyl-pyrophosphoryl-MurNAc-(pentapeptide)GlcNAc (lipid intermediate II). This chain is UDP-N-acetylglucosamine--N-acetylmuramyl-(pentapeptide) pyrophosphoryl-undecaprenol N-acetylglucosamine transferase, found in Streptococcus pyogenes serotype M6 (strain ATCC BAA-946 / MGAS10394).